The primary structure comprises 231 residues: DNA mismatch repair protein MutH (231 aa).

This sequence belongs to the MutH family.

Its subcellular location is the cytoplasm. Sequence-specific endonuclease that cleaves unmethylated GATC sequences. It is involved in DNA mismatch repair. The protein is DNA mismatch repair protein MutH of Klebsiella pneumoniae (strain 342).